A 175-amino-acid chain; its full sequence is Bifunctional protein PyrR (175 aa).

Residues 40-41 (TR), 102-110 (DDVLYTGRT), Arg135, and Val159 each bind substrate. Positions 98–110 (VIIIDDVLYTGRT) match the PRPP-binding motif.

This sequence belongs to the purine/pyrimidine phosphoribosyltransferase family. PyrR subfamily. In terms of assembly, homodimer and homohexamer; in equilibrium.

The enzyme catalyses UMP + diphosphate = 5-phospho-alpha-D-ribose 1-diphosphate + uracil. In terms of biological role, regulates transcriptional attenuation of the pyrimidine nucleotide (pyr) operon by binding in a uridine-dependent manner to specific sites on pyr mRNA. This disrupts an antiterminator hairpin in the RNA and favors formation of a downstream transcription terminator, leading to a reduced expression of downstream genes. Also displays a weak uracil phosphoribosyltransferase activity which is not physiologically significant. The sequence is that of Bifunctional protein PyrR from Staphylococcus aureus (strain MSSA476).